Reading from the N-terminus, the 245-residue chain is Ribosomal RNA large subunit methyltransferase E (245 aa).

The disordered stretch occupies residues 1–25; sequence MTKSPIGGNRSGRKLGQKVKKGKLK. The segment covering 11–25 has biased composition (basic residues); it reads SGRKLGQKVKKGKLK. S-adenosyl-L-methionine contacts are provided by glycine 81, tryptophan 83, aspartate 104, aspartate 120, and aspartate 144. The active-site Proton acceptor is lysine 184.

The protein belongs to the class I-like SAM-binding methyltransferase superfamily. RNA methyltransferase RlmE family.

The protein localises to the cytoplasm. It carries out the reaction uridine(2552) in 23S rRNA + S-adenosyl-L-methionine = 2'-O-methyluridine(2552) in 23S rRNA + S-adenosyl-L-homocysteine + H(+). In terms of biological role, specifically methylates the uridine in position 2552 of 23S rRNA at the 2'-O position of the ribose in the fully assembled 50S ribosomal subunit. The sequence is that of Ribosomal RNA large subunit methyltransferase E from Rhizobium meliloti (strain 1021) (Ensifer meliloti).